We begin with the raw amino-acid sequence, 261 residues long: Taurine import ATP-binding protein TauB (261 aa).

The ABC transporter domain maps to 4-233 (LTADRVSVRY…RWRAGDSARA (230 aa)). 38-45 (GPSGCGKT) serves as a coordination point for ATP.

This sequence belongs to the ABC transporter superfamily. Taurine importer (TC 3.A.1.17.1) family. The complex is composed of two ATP-binding proteins (TauB), two transmembrane proteins (TauC) and a solute-binding protein (TauA).

It localises to the cell inner membrane. The catalysed reaction is taurine(out) + ATP + H2O = taurine(in) + ADP + phosphate + H(+). Functionally, part of the ABC transporter complex TauABC involved in taurine import. Responsible for energy coupling to the transport system. This is Taurine import ATP-binding protein TauB from Chromobacterium violaceum (strain ATCC 12472 / DSM 30191 / JCM 1249 / CCUG 213 / NBRC 12614 / NCIMB 9131 / NCTC 9757 / MK).